Here is a 130-residue protein sequence, read N- to C-terminus: Hypocretin neuropeptide precursor (130 aa).

An N-terminal signal peptide occupies residues 1–32 (MNFPSTKVPWAAVTLLLLLLLPPALLSLGVDA). Gln-33 bears the Pyrrolidone carboxylic acid mark. Cystine bridges form between Cys-38-Cys-44 and Cys-39-Cys-46. Leu-65 carries the leucine amide modification. A Methionine amide modification is found at Met-96. Positions 97–130 (GRRAGAELEPHPCSGRGCPTVTTTALAPRGGSGV) are excised as a propeptide.

This sequence belongs to the orexin family. Specific enzymatic cleavages at paired basic residues yield the different active peptides. Restricted to neuronal cell bodies of the dorsal and lateral hypothalamus.

The protein localises to the rough endoplasmic reticulum. Its subcellular location is the cytoplasmic vesicle. The protein resides in the synapse. Neuropeptides that play a significant role in the regulation of food intake and sleep-wakefulness, possibly by coordinating the complex behavioral and physiologic responses of these complementary homeostatic functions. A broader role in the homeostatic regulation of energy metabolism, autonomic function, hormonal balance and the regulation of body fluids, is also suggested. In terms of biological role, binds to orexin receptors HCRTR1/OX1R and HCRTR2/OX2R with a high affinity. Stimulates food intake. Modulates pituitary luteinizing hormone secretion in an ovarian steroid-dependent manner. Its function is as follows. Binds to orexin receptor HCRTR2/OX2R only. Stimulates food intake. Modulates pituitary luteinizing hormone secretion in an ovarian steroid-dependent manner. The polypeptide is Hypocretin neuropeptide precursor (Hcrt) (Mus musculus (Mouse)).